A 212-amino-acid polypeptide reads, in one-letter code: Uridine kinase (212 aa).

Position 13–20 (13–20) interacts with ATP; sequence GASASGKS.

Belongs to the uridine kinase family.

Its subcellular location is the cytoplasm. It catalyses the reaction uridine + ATP = UMP + ADP + H(+). It carries out the reaction cytidine + ATP = CMP + ADP + H(+). It participates in pyrimidine metabolism; CTP biosynthesis via salvage pathway; CTP from cytidine: step 1/3. The protein operates within pyrimidine metabolism; UMP biosynthesis via salvage pathway; UMP from uridine: step 1/1. In Shewanella amazonensis (strain ATCC BAA-1098 / SB2B), this protein is Uridine kinase.